A 447-amino-acid polypeptide reads, in one-letter code: Exodeoxyribonuclease 7 large subunit (447 aa).

Belongs to the XseA family. Heterooligomer composed of large and small subunits.

It is found in the cytoplasm. The catalysed reaction is Exonucleolytic cleavage in either 5'- to 3'- or 3'- to 5'-direction to yield nucleoside 5'-phosphates.. In terms of biological role, bidirectionally degrades single-stranded DNA into large acid-insoluble oligonucleotides, which are then degraded further into small acid-soluble oligonucleotides. This Lactobacillus helveticus (strain DPC 4571) protein is Exodeoxyribonuclease 7 large subunit.